The sequence spans 149 residues: Transcriptional repressor NrdR (149 aa).

Residues 3-34 (CPFCDTEETKVIDSRLVSDGYQVRRRRECGHC) fold into a zinc finger. Positions 49–139 (PKIIKTDGTR…VYLSFDDIDQ (91 aa)) constitute an ATP-cone domain.

Belongs to the NrdR family. Zn(2+) is required as a cofactor.

Its function is as follows. Negatively regulates transcription of bacterial ribonucleotide reductase nrd genes and operons by binding to NrdR-boxes. The polypeptide is Transcriptional repressor NrdR (Haemophilus influenzae (strain PittEE)).